Here is a 574-residue protein sequence, read N- to C-terminus: Arginine--tRNA ligase (574 aa).

Residues 121 to 131 (PNIAKEMHIGH) carry the 'HIGH' region motif.

It belongs to the class-I aminoacyl-tRNA synthetase family. As to quaternary structure, monomer.

The protein resides in the cytoplasm. It carries out the reaction tRNA(Arg) + L-arginine + ATP = L-arginyl-tRNA(Arg) + AMP + diphosphate. In Buchnera aphidicola subsp. Acyrthosiphon pisum (strain Tuc7), this protein is Arginine--tRNA ligase.